The primary structure comprises 634 residues: Kelch-like protein 22 (634 aa).

Ala-2 carries the post-translational modification N-acetylalanine. Positions Phe-50–Leu-117 constitute a BTB domain. Kelch repeat units lie at residues Cys-299–Asn-349, Phe-350–Arg-399, Tyr-400–Gly-446, Met-448–Asp-493, Lys-494–Thr-544, and Arg-545–Leu-593. The residue at position 463 (Thr-463) is a Phosphothreonine. Tyr-466 is modified (phosphotyrosine). Residues Glu-600–Asp-634 are disordered. A Phosphothreonine modification is found at Thr-605. Residues Asp-624–Asp-634 show a composition bias toward acidic residues.

Component of the BCR(KLHL22) E3 ubiquitin ligase complex, at least composed of CUL3, KLHL22 and RBX1. Interacts with PLK1. Interacts with DEPDC5 (via DEP domain); the interaction depends on amino acid availability. Interacts with YWHAE; required for the nuclear localization of KLHL22 upon amino acid starvation.

The protein localises to the cytoplasm. Its subcellular location is the cytosol. It is found in the cytoskeleton. It localises to the microtubule organizing center. The protein resides in the centrosome. The protein localises to the spindle. Its subcellular location is the nucleus. It is found in the lysosome. The protein operates within protein modification; protein ubiquitination. Substrate-specific adapter of a BCR (BTB-CUL3-RBX1) E3 ubiquitin ligase complex required for chromosome alignment and localization of PLK1 at kinetochores. The BCR(KLHL22) ubiquitin ligase complex mediates monoubiquitination of PLK1, leading to PLK1 dissociation from phosphoreceptor proteins and subsequent removal from kinetochores, allowing silencing of the spindle assembly checkpoint (SAC) and chromosome segregation. Monoubiquitination of PLK1 does not lead to PLK1 degradation. The BCR(KLHL22) ubiquitin ligase complex is also responsible for the amino acid-stimulated 'Lys-48' polyubiquitination and proteasomal degradation of DEPDC5. Through the degradation of DEPDC5, releases the GATOR1 complex-mediated inhibition of the TORC1 pathway. It is therefore an amino acid-dependent activator within the amino acid-sensing branch of the TORC1 pathway, indirectly regulating different cellular processes including cell growth and autophagy. This Ailuropoda melanoleuca (Giant panda) protein is Kelch-like protein 22 (KLHL22).